Reading from the N-terminus, the 134-residue chain is ATP synthase epsilon chain (134 aa).

This sequence belongs to the ATPase epsilon chain family. As to quaternary structure, F-type ATPases have 2 components, CF(1) - the catalytic core - and CF(0) - the membrane proton channel. CF(1) has five subunits: alpha(3), beta(3), gamma(1), delta(1), epsilon(1). CF(0) has three main subunits: a, b and c.

It localises to the cell inner membrane. Functionally, produces ATP from ADP in the presence of a proton gradient across the membrane. The polypeptide is ATP synthase epsilon chain (Solibacter usitatus (strain Ellin6076)).